The following is a 562-amino-acid chain: SLAIN motif-containing protein-like (562 aa).

Disordered stretches follow at residues 292–313 (QDYA…LHSL), 344–381 (HRYS…IQNH), and 409–562 (SLEA…DGCY). 2 stretches are compositionally biased toward low complexity: residues 295-311 (ASSS…ASLH) and 345-355 (RYSPSPLSSPR). Composition is skewed to polar residues over residues 356–370 (CQSP…TTSR), 424–442 (QGPS…STPP), 465–531 (VSTS…STVP), and 539–553 (SRRS…STLG).

Belongs to the SLAIN motif-containing family.

This is SLAIN motif-containing protein-like from Xenopus laevis (African clawed frog).